The sequence spans 80 residues: uncharacterized protein (80 aa).

Helical transmembrane passes span 2-22 (INLW…IGQV), 32-52 (FFGM…LTGG), and 55-75 (LVTG…RFMV).

It localises to the cell membrane. This is an uncharacterized protein from Escherichia coli (strain K12).